The following is a 531-amino-acid chain: Retinoid isomerohydrolase (531 aa).

The S-palmitoyl cysteine; in membrane form moiety is linked to residue Cys-112. His-180, His-241, and His-313 together coordinate Fe cation. A lipid anchor (S-palmitoyl cysteine; in membrane form) is attached at Cys-329. His-526 serves as a coordination point for Fe cation.

The protein belongs to the carotenoid oxygenase family. It depends on Fe(2+) as a cofactor. Post-translationally, palmitoylated. As to expression, retinal pigment epithelium-specific.

The protein localises to the cytoplasm. It localises to the cell membrane. It carries out the reaction an all-trans-retinyl ester + H2O = 11-cis-retinol + a fatty acid + H(+). The catalysed reaction is lutein = (3R,3'S)-zeaxanthin. The enzyme catalyses all-trans-retinyl hexadecanoate + H2O = 11-cis-retinol + hexadecanoate + H(+). Its function is as follows. Plays important roles in the production of 11-cis retinal and in visual pigment regeneration. Capable of catalyzing the isomerization of lutein to meso-zeaxanthin an eye-specific carotenoid. The protein is Retinoid isomerohydrolase (rpe65a) of Danio rerio (Zebrafish).